The sequence spans 596 residues: MLVLKFVCLLASVAAAKPTSWSSHKVVEHLESAPEGWRIVGAADPAAVIDFWLAIERENPEQLYDTIYDVSTPGRARYGKHLKREELDDLLRPRVETSEGIISWLTNGGVKPQGIRDEGDWIRFSTDVKTAEQLMKTQFHVFKDDVSSVSRIRTLEYSVPASISSHVQMIQPTTLFGRQKPQNSLILSPLTTDLEAMSEEEFSASNCRSLVTTACLRELYGLGDRVTQARDDNRIGVSGFLEEYAQYRDLDLFLSRFEPSAKGFNFSEGLIAGGKNTQGGPGSSTEANLDMQYVVGLSHKAKVTYYSTAGRGPLIPDLSQPDQASNDNEPYLEQLRYLVKLPKNQLPSVLSTSYGDTEQSLPASYTKATCDLFAQLGTMGVSVIFSSGDTGPGSSCQTNDGKNSTRFNPIYPASCPFVTSIGGTVGTEPERAVSFSSGGFSDRFPRPQYQDNAVKGYLKILGNQWSGLFNPNGRAFPDIAAQGSNYAVYDKGRMTGVSGTSASAPAMAAIIAQLNDFRLAKGSPVLGFLNPWIYSKGFSGFTDIVDGGSRGCTGYDIYSGLKAKRVPYASWNATKGWDPVTGFGTPNFQALTKVLP.

Positions 1–16 (MLVLKFVCLLASVAAA) are cleaved as a signal peptide. Residues 18-203 (PTSWSSHKVV…LEAMSEEEFS (186 aa)) constitute a propeptide, removed in mature form. In terms of domain architecture, Peptidase S53 spans 210–596 (LVTTACLREL…NFQALTKVLP (387 aa)). An N-linked (GlcNAc...) asparagine glycan is attached at Asn-265. Active-site charge relay system residues include Glu-286 and Asp-290. Residue Asn-403 is glycosylated (N-linked (GlcNAc...) asparagine). Ser-501 functions as the Charge relay system in the catalytic mechanism. The Ca(2+) site is built by Asp-543 and Ile-544. An N-linked (GlcNAc...) asparagine glycan is attached at Asn-572. Positions 576 and 578 each coordinate Ca(2+).

The cofactor is Ca(2+).

The protein localises to the secreted. The protein resides in the extracellular space. It catalyses the reaction Release of an N-terminal tripeptide from a polypeptide.. Functionally, secreted tripeptidyl-peptidase which degrades proteins at acidic pHs and is involved in virulence. This is Tripeptidyl-peptidase SED2 (SED2) from Arthroderma otae (strain ATCC MYA-4605 / CBS 113480) (Microsporum canis).